The chain runs to 392 residues: Phospho-N-acetylmuramoyl-pentapeptide-transferase (392 aa).

10 helical membrane-spanning segments follow: residues 24 to 44 (YLTF…LLAG), 76 to 96 (TMGG…WFDL), 100 to 120 (FVWV…VDDW), 137 to 157 (YFWQ…CISE), 193 to 213 (VSYP…IVGS), 225 to 245 (GLAI…AYVT), 262 to 282 (AGEL…FLWF), 289 to 309 (VFMG…IAII), 314 to 334 (IVLA…MLQV), and 369 to 389 (QVVV…LTTL).

Belongs to the glycosyltransferase 4 family. MraY subfamily. Mg(2+) is required as a cofactor.

The protein localises to the cell inner membrane. The catalysed reaction is UDP-N-acetyl-alpha-D-muramoyl-L-alanyl-gamma-D-glutamyl-meso-2,6-diaminopimeloyl-D-alanyl-D-alanine + di-trans,octa-cis-undecaprenyl phosphate = di-trans,octa-cis-undecaprenyl diphospho-N-acetyl-alpha-D-muramoyl-L-alanyl-D-glutamyl-meso-2,6-diaminopimeloyl-D-alanyl-D-alanine + UMP. It participates in cell wall biogenesis; peptidoglycan biosynthesis. Catalyzes the initial step of the lipid cycle reactions in the biosynthesis of the cell wall peptidoglycan: transfers peptidoglycan precursor phospho-MurNAc-pentapeptide from UDP-MurNAc-pentapeptide onto the lipid carrier undecaprenyl phosphate, yielding undecaprenyl-pyrophosphoryl-MurNAc-pentapeptide, known as lipid I. This Paracidovorax citrulli (strain AAC00-1) (Acidovorax citrulli) protein is Phospho-N-acetylmuramoyl-pentapeptide-transferase.